A 428-amino-acid polypeptide reads, in one-letter code: Involucrin (428 aa).

2 disordered regions span residues 1 to 128 (MSQQ…EEKK) and 140 to 398 (KRDD…GQAQ). Residues 56-76 (PSKHEEKHVTIVKGVPEHECE) show a composition bias toward basic and acidic residues. Positions 77–92 (QQQQAQGQERQQQHWG) are enriched in low complexity. Composition is skewed to basic and acidic residues over residues 107-117 (LKQEEAQREKQ), 162-174 (QLKHLEQQEKPLE), and 192-208 (QLKHLEEQKGQLKHLEQ). Over residues 209–218 (QEGQLELPEQ) the composition is skewed to low complexity. Residues 220–297 (DQPKHLEQLE…CEGQLEHLEQ (78 aa)) show a composition bias toward basic and acidic residues. Positions 298-311 (QEGQLELPEQQVGQ) are enriched in low complexity. Composition is skewed to basic and acidic residues over residues 313-327 (KHLEQEEKQLEHPEQ), 352-366 (KHLEQQEKQLEHPEQ), and 374-385 (QLKDLEQQERQL).

It belongs to the involucrin family. In terms of assembly, directly or indirectly cross-linked to cornifelin (CNFN). In terms of processing, substrate of transglutaminase. Specific glutamines or lysines are cross-linked to keratins, desmoplakin and to inter involucrin molecules. Keratinocytes of epidermis and other stratified squamous epithelia.

It localises to the cytoplasm. Functionally, part of the insoluble cornified cell envelope (CE) of stratified squamous epithelia. The protein is Involucrin (IVL) of Cebus albifrons (White-fronted capuchin).